A 233-amino-acid polypeptide reads, in one-letter code: 2,3-bisphosphoglycerate-dependent phosphoglycerate mutase (233 aa).

Substrate is bound by residues 8 to 15 (RHGQSLWN), 21 to 22 (TG), Arg60, 116 to 119 (ERYY), Lys127, 143 to 144 (RR), and 187 to 188 (GN). His9 functions as the Tele-phosphohistidine intermediate in the catalytic mechanism. Glu116 acts as the Proton donor/acceptor in catalysis.

It belongs to the phosphoglycerate mutase family. BPG-dependent PGAM subfamily.

The enzyme catalyses (2R)-2-phosphoglycerate = (2R)-3-phosphoglycerate. Its pathway is carbohydrate degradation; glycolysis; pyruvate from D-glyceraldehyde 3-phosphate: step 3/5. Catalyzes the interconversion of 2-phosphoglycerate and 3-phosphoglycerate. The polypeptide is 2,3-bisphosphoglycerate-dependent phosphoglycerate mutase (Gloeothece citriformis (strain PCC 7424) (Cyanothece sp. (strain PCC 7424))).